A 236-amino-acid chain; its full sequence is Baculoviral IAP repeat-containing protein 8 (236 aa).

A BIR repeat occupies 7 to 70; it reads RLITFGTWMY…KWYPGCKYLL (64 aa). Zn(2+) is bound by residues C39, C42, H59, and C66. An RING-type zinc finger spans residues 189 to 224; the sequence is CKICMDRHIAVVFIPCGHLVTCKQCAEAVDRCPMCS.

The protein belongs to the IAP family. Binds to caspase-9.

It is found in the cytoplasm. Functionally, protects against apoptosis mediated by BAX. The sequence is that of Baculoviral IAP repeat-containing protein 8 (BIRC8) from Pan troglodytes (Chimpanzee).